A 281-amino-acid polypeptide reads, in one-letter code: uncharacterized protein (281 aa).

4 helical membrane-spanning segments follow: residues 8–28 (ALPV…FIWS), 97–117 (LAVA…RGYG), 147–167 (PARI…GLAV), and 210–230 (IASV…IVPA).

It to S.pombe bem46 and yeast YNL320w.

It localises to the cell membrane. This is an uncharacterized protein from Mycobacterium tuberculosis (strain ATCC 25618 / H37Rv).